Consider the following 929-residue polypeptide: Dual specificity protein phosphatase PHS1 (929 aa).

Disordered regions lie at residues Met1 to Asp27 and Pro545 to Ser618. 2 stretches are compositionally biased toward basic and acidic residues: residues His552 to Met580 and Glu591 to His606. The Tyrosine-protein phosphatase domain maps to Lys703 to Gly848. The active-site Phosphocysteine intermediate is the Cys792. Cys792–Arg798 serves as a coordination point for substrate. The Nuclear export signal signature appears at Gln903–Leu911.

In terms of assembly, interacts with MPK18. As to expression, expressed in roots, leaves and flowers.

It localises to the cytoplasm. It catalyses the reaction O-phospho-L-seryl-[protein] + H2O = L-seryl-[protein] + phosphate. The catalysed reaction is O-phospho-L-threonyl-[protein] + H2O = L-threonyl-[protein] + phosphate. The enzyme catalyses O-phospho-L-tyrosyl-[protein] + H2O = L-tyrosyl-[protein] + phosphate. Its function is as follows. Probable dual specificity phosphatase that binds and dephosphorylates MPK18, modulating the organization and dynamics of cortical microtubules. Acts as a negative regulator of abscisic acid (ABA) signaling during seed germination and light-induced stomata aperture. This Arabidopsis thaliana (Mouse-ear cress) protein is Dual specificity protein phosphatase PHS1 (PHS1).